A 510-amino-acid chain; its full sequence is Probable inorganic carbon transporter subunit DabB (510 aa).

14 helical membrane passes run 9–29, 37–57, 68–88, 105–122, 125–145, 158–178, 204–224, 226–246, 266–286, 303–323, 355–375, 382–402, 410–430, and 446–466; these read TLLT…LLFL, FVHI…LALV, WHLD…GLII, YFAL…AWLS, LRFM…LIGL, ISGY…IWLF, TGIN…WPFQ, WLIE…AGLV, QIIL…ISLV, GFML…HLIL, LWMI…WFIT, LVSA…LVVF, IAGL…HNSL, and APAV…CTFV.

The protein belongs to the inorganic carbon transporter (TC 9.A.2) DabB family. Forms a complex with DabA.

It localises to the cell membrane. Its function is as follows. Part of an energy-coupled inorganic carbon pump. Expression of both dabA and dabB (DA2) restores growth in ambient air to E.coli deleted of its carbonic anhydrase genes (called CAfree, deletion of 'can' and 'cynT'). This chain is Probable inorganic carbon transporter subunit DabB, found in Bacillus anthracis.